A 451-amino-acid polypeptide reads, in one-letter code: UPF0210 protein Asuc_1169 (451 aa).

Belongs to the UPF0210 family. In terms of assembly, homodimer.

This chain is UPF0210 protein Asuc_1169, found in Actinobacillus succinogenes (strain ATCC 55618 / DSM 22257 / CCUG 43843 / 130Z).